Consider the following 137-residue polypeptide: Peptide methionine sulfoxide reductase MsrB (137 aa).

One can recognise a MsrB domain in the interval 7 to 129; it reads AEELKKNLSE…NSASLRFTDG (123 aa). Positions 46, 49, 95, and 98 each coordinate Zn(2+). Cys118 acts as the Nucleophile in catalysis.

It belongs to the MsrB Met sulfoxide reductase family. Zn(2+) serves as cofactor.

The enzyme catalyses L-methionyl-[protein] + [thioredoxin]-disulfide + H2O = L-methionyl-(R)-S-oxide-[protein] + [thioredoxin]-dithiol. This Escherichia coli O8 (strain IAI1) protein is Peptide methionine sulfoxide reductase MsrB.